We begin with the raw amino-acid sequence, 67 residues long: ATP synthase F(0) complex subunit 8 (67 aa).

A helical membrane pass occupies residues 8 to 24 (TWFITIISSMATLFILF). Position 54 is an N6-acetyllysine; alternate (lysine 54). N6-succinyllysine; alternate is present on lysine 54. Residue lysine 57 is modified to N6-acetyllysine.

This sequence belongs to the ATPase protein 8 family. In terms of assembly, component of the ATP synthase complex composed at least of ATP5F1A/subunit alpha, ATP5F1B/subunit beta, ATP5MC1/subunit c (homooctomer), MT-ATP6/subunit a, MT-ATP8/subunit 8, ATP5ME/subunit e, ATP5MF/subunit f, ATP5MG/subunit g, ATP5MK/subunit k, ATP5MJ/subunit j, ATP5F1C/subunit gamma, ATP5F1D/subunit delta, ATP5F1E/subunit epsilon, ATP5PF/subunit F6, ATP5PB/subunit b, ATP5PD/subunit d, ATP5PO/subunit OSCP. ATP synthase complex consists of a soluble F(1) head domain (subunits alpha(3) and beta(3)) - the catalytic core - and a membrane F(0) domain - the membrane proton channel (subunits c, a, 8, e, f, g, k and j). These two domains are linked by a central stalk (subunits gamma, delta, and epsilon) rotating inside the F1 region and a stationary peripheral stalk (subunits F6, b, d, and OSCP). Interacts with PRICKLE3.

It localises to the mitochondrion membrane. Its function is as follows. Subunit 8, of the mitochondrial membrane ATP synthase complex (F(1)F(0) ATP synthase or Complex V) that produces ATP from ADP in the presence of a proton gradient across the membrane which is generated by electron transport complexes of the respiratory chain. ATP synthase complex consist of a soluble F(1) head domain - the catalytic core - and a membrane F(1) domain - the membrane proton channel. These two domains are linked by a central stalk rotating inside the F(1) region and a stationary peripheral stalk. During catalysis, ATP synthesis in the catalytic domain of F(1) is coupled via a rotary mechanism of the central stalk subunits to proton translocation. In vivo, can only synthesize ATP although its ATP hydrolase activity can be activated artificially in vitro. Part of the complex F(0) domain. The polypeptide is ATP synthase F(0) complex subunit 8 (Rattus norvegicus (Rat)).